We begin with the raw amino-acid sequence, 715 residues long: Fatty acid oxidation complex subunit alpha (715 aa).

Residues 1–190 are enoyl-CoA hydratase/isomerase; sequence MIYEGKAITV…KVGAVDAVVA (190 aa). Aspartate 297 is a substrate binding site. The tract at residues 312–715 is 3-hydroxyacyl-CoA dehydrogenase; sequence HDVKQAAVLG…MAKNGQRFFN (404 aa). Residues methionine 325, aspartate 344, 401-403, lysine 408, and serine 430 contribute to the NAD(+) site; that span reads VVE. Catalysis depends on histidine 451, which acts as the For 3-hydroxyacyl-CoA dehydrogenase activity. Residue asparagine 454 coordinates NAD(+). Asparagine 501 and tyrosine 660 together coordinate substrate.

The protein in the N-terminal section; belongs to the enoyl-CoA hydratase/isomerase family. This sequence in the C-terminal section; belongs to the 3-hydroxyacyl-CoA dehydrogenase family. As to quaternary structure, heterotetramer of two alpha chains (FadB) and two beta chains (FadA).

It carries out the reaction a (3S)-3-hydroxyacyl-CoA + NAD(+) = a 3-oxoacyl-CoA + NADH + H(+). The catalysed reaction is a (3S)-3-hydroxyacyl-CoA = a (2E)-enoyl-CoA + H2O. It catalyses the reaction a 4-saturated-(3S)-3-hydroxyacyl-CoA = a (3E)-enoyl-CoA + H2O. The enzyme catalyses (3S)-3-hydroxybutanoyl-CoA = (3R)-3-hydroxybutanoyl-CoA. It carries out the reaction a (3Z)-enoyl-CoA = a 4-saturated (2E)-enoyl-CoA. The catalysed reaction is a (3E)-enoyl-CoA = a 4-saturated (2E)-enoyl-CoA. Its pathway is lipid metabolism; fatty acid beta-oxidation. In terms of biological role, involved in the aerobic and anaerobic degradation of long-chain fatty acids via beta-oxidation cycle. Catalyzes the formation of 3-oxoacyl-CoA from enoyl-CoA via L-3-hydroxyacyl-CoA. It can also use D-3-hydroxyacyl-CoA and cis-3-enoyl-CoA as substrate. This Pseudomonas entomophila (strain L48) protein is Fatty acid oxidation complex subunit alpha.